Reading from the N-terminus, the 261-residue chain is Cytochrome c oxidase subunit 3 (261 aa).

The Mitochondrial matrix portion of the chain corresponds to 1–15 (MTHQTHAYHMVNPSP). The helical transmembrane segment at 16–34 (WPLTGALSALLMTSGLAMW) threads the bilayer. The Mitochondrial intermembrane portion of the chain corresponds to 35-40 (FHFNST). The helical transmembrane segment at 41–66 (LLLALGLLTNILTMYQWWRDIIREST) threads the bilayer. At 67 to 72 (FQGHHT) the chain is on the mitochondrial matrix side. Residues 73 to 105 (SIVQKGLRYGMILFIISEVFFFSGFFWAFYHSS) traverse the membrane as a helical segment. The Mitochondrial intermembrane segment spans residues 106–128 (LAPTPELGGCWPPTGIHPLNPLE). The chain crosses the membrane as a helical span at residues 129–152 (VPLLNTSVLLASGVSITWAHHSLM). At 153–155 (EGN) the chain is on the mitochondrial matrix side. The helical transmembrane segment at 156 to 183 (RKNMLQGLFITISLGVYFTLLQASEYYE) threads the bilayer. The Mitochondrial intermembrane portion of the chain corresponds to 184–190 (ASFTISD). A helical transmembrane segment spans residues 191 to 223 (GVYGSTFFVATGFHGLHVIIGSTFLIVCFLRQL). At 224-232 (KFHFTSSHH) the chain is on the mitochondrial matrix side. A helical membrane pass occupies residues 233 to 256 (FGFEAAAWYWHFVDVVWLFLYVSI). Residues 257-261 (YWWGS) lie on the Mitochondrial intermembrane side of the membrane.

This sequence belongs to the cytochrome c oxidase subunit 3 family. In terms of assembly, component of the cytochrome c oxidase (complex IV, CIV), a multisubunit enzyme composed of 14 subunits. The complex is composed of a catalytic core of 3 subunits MT-CO1, MT-CO2 and MT-CO3, encoded in the mitochondrial DNA, and 11 supernumerary subunits COX4I, COX5A, COX5B, COX6A, COX6B, COX6C, COX7A, COX7B, COX7C, COX8 and NDUFA4, which are encoded in the nuclear genome. The complex exists as a monomer or a dimer and forms supercomplexes (SCs) in the inner mitochondrial membrane with NADH-ubiquinone oxidoreductase (complex I, CI) and ubiquinol-cytochrome c oxidoreductase (cytochrome b-c1 complex, complex III, CIII), resulting in different assemblies (supercomplex SCI(1)III(2)IV(1) and megacomplex MCI(2)III(2)IV(2)).

It localises to the mitochondrion inner membrane. It catalyses the reaction 4 Fe(II)-[cytochrome c] + O2 + 8 H(+)(in) = 4 Fe(III)-[cytochrome c] + 2 H2O + 4 H(+)(out). Functionally, component of the cytochrome c oxidase, the last enzyme in the mitochondrial electron transport chain which drives oxidative phosphorylation. The respiratory chain contains 3 multisubunit complexes succinate dehydrogenase (complex II, CII), ubiquinol-cytochrome c oxidoreductase (cytochrome b-c1 complex, complex III, CIII) and cytochrome c oxidase (complex IV, CIV), that cooperate to transfer electrons derived from NADH and succinate to molecular oxygen, creating an electrochemical gradient over the inner membrane that drives transmembrane transport and the ATP synthase. Cytochrome c oxidase is the component of the respiratory chain that catalyzes the reduction of oxygen to water. Electrons originating from reduced cytochrome c in the intermembrane space (IMS) are transferred via the dinuclear copper A center (CU(A)) of subunit 2 and heme A of subunit 1 to the active site in subunit 1, a binuclear center (BNC) formed by heme A3 and copper B (CU(B)). The BNC reduces molecular oxygen to 2 water molecules using 4 electrons from cytochrome c in the IMS and 4 protons from the mitochondrial matrix. This Equus asinus (Donkey) protein is Cytochrome c oxidase subunit 3 (MT-CO3).